The sequence spans 395 residues: Flap endonuclease 1 (395 aa).

The segment at 1–104 (MGIKHLYQII…GELAKRFMRK (104 aa)) is N-domain. Residue D34 coordinates Mg(2+). 2 residues coordinate DNA: R47 and R70. Mg(2+) is bound by residues D86, E158, E160, D179, and D181. The interval 122-253 (EVEKFSRRTV…NTALKLIRDH (132 aa)) is I-domain. E158 is a DNA binding site. Positions 231 and 233 each coordinate DNA. D233 serves as a coordination point for Mg(2+). The segment at 341–349 (QQSRLEGFF) is interaction with PCNA. Residues 360 to 389 (AVLKRKHEEKLELQKKKKKEDAKAKKEAKS) are compositionally biased toward basic and acidic residues. The interval 360–395 (AVLKRKHEEKLELQKKKKKEDAKAKKEAKSKPRGTT) is disordered.

The protein belongs to the XPG/RAD2 endonuclease family. FEN1 subfamily. In terms of assembly, interacts with PCNA. Three molecules of FEN1 bind to one PCNA trimer with each molecule binding to one PCNA monomer. PCNA stimulates the nuclease activity without altering cleavage specificity. Mg(2+) serves as cofactor. Post-translationally, phosphorylated. Phosphorylation upon DNA damage induces relocalization to the nuclear plasma.

It is found in the nucleus. The protein localises to the nucleolus. Its subcellular location is the nucleoplasm. It localises to the mitochondrion. Its function is as follows. Structure-specific nuclease with 5'-flap endonuclease and 5'-3' exonuclease activities involved in DNA replication and repair. During DNA replication, cleaves the 5'-overhanging flap structure that is generated by displacement synthesis when DNA polymerase encounters the 5'-end of a downstream Okazaki fragment. It enters the flap from the 5'-end and then tracks to cleave the flap base, leaving a nick for ligation. Also involved in the long patch base excision repair (LP-BER) pathway, by cleaving within the apurinic/apyrimidinic (AP) site-terminated flap. Acts as a genome stabilization factor that prevents flaps from equilibrating into structures that lead to duplications and deletions. Also possesses 5'-3' exonuclease activity on nicked or gapped double-stranded DNA, and exhibits RNase H activity. Also involved in replication and repair of rDNA and in repairing mitochondrial DNA. In Ajellomyces capsulatus (strain NAm1 / WU24) (Darling's disease fungus), this protein is Flap endonuclease 1.